Here is a 211-residue protein sequence, read N- to C-terminus: MAKKKFSKDWIHQHINDPYVKMAQQKGYRARAAFKLIEILDTEKLMRRGDIVVDLGSAPGSWSQVARERLAGPGGVVDGRIIALDLLPMEPVAGVEFIQGDFRDEAVLQQLQEMVGGQPVSLVISDMAPNLSGVGVADSARIQHVCELALDFACNHLKPDGALIVKAFHGSGFSQIVQSFKQRFKRVVERKPKASRDKSSETFLVARDLKS.

S-adenosyl-L-methionine contacts are provided by Gly60, Trp62, Asp85, Asp101, and Asp126. The Proton acceptor role is filled by Lys166.

This sequence belongs to the class I-like SAM-binding methyltransferase superfamily. RNA methyltransferase RlmE family.

It localises to the cytoplasm. The catalysed reaction is uridine(2552) in 23S rRNA + S-adenosyl-L-methionine = 2'-O-methyluridine(2552) in 23S rRNA + S-adenosyl-L-homocysteine + H(+). Its function is as follows. Specifically methylates the uridine in position 2552 of 23S rRNA at the 2'-O position of the ribose in the fully assembled 50S ribosomal subunit. This chain is Ribosomal RNA large subunit methyltransferase E, found in Bordetella petrii (strain ATCC BAA-461 / DSM 12804 / CCUG 43448).